The chain runs to 203 residues: Small ribosomal subunit protein uS4 (203 aa).

One can recognise an S4 RNA-binding domain in the interval arginine 93–aspartate 154.

Belongs to the universal ribosomal protein uS4 family. In terms of assembly, part of the 30S ribosomal subunit. Contacts protein S5. The interaction surface between S4 and S5 is involved in control of translational fidelity.

One of the primary rRNA binding proteins, it binds directly to 16S rRNA where it nucleates assembly of the body of the 30S subunit. Its function is as follows. With S5 and S12 plays an important role in translational accuracy. The polypeptide is Small ribosomal subunit protein uS4 (Chlorobium luteolum (strain DSM 273 / BCRC 81028 / 2530) (Pelodictyon luteolum)).